Consider the following 391-residue polypeptide: Anhydro-N-acetylmuramic acid kinase (391 aa).

Position 9–16 (9–16 (GTSYDAVE)) interacts with ATP.

The protein belongs to the anhydro-N-acetylmuramic acid kinase family.

It catalyses the reaction 1,6-anhydro-N-acetyl-beta-muramate + ATP + H2O = N-acetyl-D-muramate 6-phosphate + ADP + H(+). It functions in the pathway amino-sugar metabolism; 1,6-anhydro-N-acetylmuramate degradation. The protein operates within cell wall biogenesis; peptidoglycan recycling. Its function is as follows. Catalyzes the specific phosphorylation of 1,6-anhydro-N-acetylmuramic acid (anhMurNAc) with the simultaneous cleavage of the 1,6-anhydro ring, generating MurNAc-6-P. Is required for the utilization of anhMurNAc either imported from the medium or derived from its own cell wall murein, and thus plays a role in cell wall recycling. This chain is Anhydro-N-acetylmuramic acid kinase, found in Streptomyces coelicolor (strain ATCC BAA-471 / A3(2) / M145).